Here is a 228-residue protein sequence, read N- to C-terminus: UPF0173 metal-dependent hydrolase lwe1590 (228 aa).

Belongs to the UPF0173 family.

The protein is UPF0173 metal-dependent hydrolase lwe1590 of Listeria welshimeri serovar 6b (strain ATCC 35897 / DSM 20650 / CCUG 15529 / CIP 8149 / NCTC 11857 / SLCC 5334 / V8).